The chain runs to 1375 residues: DNA-directed RNA polymerase subunit beta' (1375 aa).

Residues Cys-70, Cys-72, Cys-85, and Cys-88 each coordinate Zn(2+). Positions 461, 463, and 465 each coordinate Mg(2+). The Zn(2+) site is built by Cys-797, Cys-871, Cys-878, and Cys-881.

It belongs to the RNA polymerase beta' chain family. In terms of assembly, the RNAP catalytic core consists of 2 alpha, 1 beta, 1 beta' and 1 omega subunit. When a sigma factor is associated with the core the holoenzyme is formed, which can initiate transcription. Requires Mg(2+) as cofactor. It depends on Zn(2+) as a cofactor.

It carries out the reaction RNA(n) + a ribonucleoside 5'-triphosphate = RNA(n+1) + diphosphate. Its function is as follows. DNA-dependent RNA polymerase catalyzes the transcription of DNA into RNA using the four ribonucleoside triphosphates as substrates. The chain is DNA-directed RNA polymerase subunit beta' from Neorickettsia sennetsu (strain ATCC VR-367 / Miyayama) (Ehrlichia sennetsu).